The chain runs to 338 residues: 1-aminocyclopropane-1-carboxylate deaminase (338 aa).

The residue at position 51 (Lys-51) is an N6-(pyridoxal phosphate)lysine. Ser-78 acts as the Nucleophile in catalysis.

Belongs to the ACC deaminase/D-cysteine desulfhydrase family. Homotrimer. It depends on pyridoxal 5'-phosphate as a cofactor.

The catalysed reaction is 1-aminocyclopropane-1-carboxylate + H2O = 2-oxobutanoate + NH4(+). Its function is as follows. Catalyzes a cyclopropane ring-opening reaction, the irreversible conversion of 1-aminocyclopropane-1-carboxylate (ACC) to ammonia and alpha-ketobutyrate. Allows growth on ACC as a nitrogen source. This Methylibium petroleiphilum (strain ATCC BAA-1232 / LMG 22953 / PM1) protein is 1-aminocyclopropane-1-carboxylate deaminase.